Consider the following 418-residue polypeptide: Gamma-glutamyl phosphate reductase (418 aa).

This sequence belongs to the gamma-glutamyl phosphate reductase family.

It localises to the cytoplasm. The enzyme catalyses L-glutamate 5-semialdehyde + phosphate + NADP(+) = L-glutamyl 5-phosphate + NADPH + H(+). It participates in amino-acid biosynthesis; L-proline biosynthesis; L-glutamate 5-semialdehyde from L-glutamate: step 2/2. Its function is as follows. Catalyzes the NADPH-dependent reduction of L-glutamate 5-phosphate into L-glutamate 5-semialdehyde and phosphate. The product spontaneously undergoes cyclization to form 1-pyrroline-5-carboxylate. This is Gamma-glutamyl phosphate reductase from Teredinibacter turnerae (strain ATCC 39867 / T7901).